Consider the following 157-residue polypeptide: uncharacterized protein (157 aa).

The region spanning 9 to 154 is the N-acetyltransferase domain; that stretch reads LLINYKTLDE…ETNSNAITNE (146 aa).

This is an uncharacterized protein from Bacillus mycoides (strain KBAB4) (Bacillus weihenstephanensis).